A 610-amino-acid polypeptide reads, in one-letter code: Zinc metalloproteinase-disintegrin-like brevilysin H6 (610 aa).

The first 20 residues, 1 to 20 (MIQVLLVTICLAAFPYQGSS), serve as a signal peptide directing secretion. Positions 21–191 (IILESGNVND…ASQLNLTPEQ (171 aa)) are excised as a propeptide. Q192 carries the pyrrolidone carboxylic acid modification. In terms of domain architecture, Peptidase M12B spans 198–394 (RFVELVLVAD…HNPECIVNEP (197 aa)). Ca(2+) contacts are provided by E201 and D285. 4 disulfide bridges follow: C309–C389, C349–C373, C351–C356, and C373–C378. H334 is a Zn(2+) binding site. Residue E335 is part of the active site. Zn(2+) is bound by residues H338 and H344. An N-linked (GlcNAc...) asparagine glycan is attached at N372. Ca(2+) is bound by residues C389, N392, V404, N407, L409, E411, E414, and D417. Residues 402 to 488 (PPVCGNELLE…ECPADVFHKN (87 aa)) form the Disintegrin domain. 22 cysteine pairs are disulfide-bonded: C405–C424, C405–C434, C416–C429, C416–C434, C418–C424, C428–C451, C442–C448, C447–C473, C460–C480, C467–C492, C467–C499, C492–C504, C499–C504, C511–C526, C511–C561, C526–C572, C539–C549, C549–C556, C556–C598, C561–C572, C592–C603, and C598–C603. The short motif at 466–468 (ECD) is the D/ECD-tripeptide element. Ca(2+) is bound by residues D468, P469, E471, D483, and V484.

Belongs to the venom metalloproteinase (M12B) family. P-III subfamily. P-IIIb sub-subfamily. In terms of assembly, monomer. The cofactor is Zn(2+). Post-translationally, in the absence of calcium ions, is autocatalytically degraded giving 29 (p29K) and 45 kDa (p45K) fragments. In presence of calcium ions, the p45K is not detected. In terms of tissue distribution, expressed by the venom gland.

It localises to the secreted. Its activity is regulated as follows. Inhibited by chelating agents. Calcium ions enhance its activity, they also suppress autoproteolysis, and contribute to the stability of the enzyme against pH, heating, urea and cysteine. Its function is as follows. Shows weak hemorrhagic activity. Rapidly degrades the alpha-chain of fibrinogen (FGA). In Gloydius brevicauda (Korean slamosa snake), this protein is Zinc metalloproteinase-disintegrin-like brevilysin H6.